We begin with the raw amino-acid sequence, 463 residues long: L-seryl-tRNA(Sec) selenium transferase (463 aa).

Position 295 is an N6-(pyridoxal phosphate)lysine (Lys-295).

The protein belongs to the SelA family. As to quaternary structure, homodecamer; pentamer of dimers. Binds only one seryl-tRNA(Sec) per dimer. It depends on pyridoxal 5'-phosphate as a cofactor.

The protein localises to the cytoplasm. It catalyses the reaction L-seryl-tRNA(Sec) + selenophosphate + H(+) = L-selenocysteinyl-tRNA(Sec) + phosphate. It functions in the pathway aminoacyl-tRNA biosynthesis; selenocysteinyl-tRNA(Sec) biosynthesis; selenocysteinyl-tRNA(Sec) from L-seryl-tRNA(Sec) (bacterial route): step 1/1. In terms of biological role, converts seryl-tRNA(Sec) to selenocysteinyl-tRNA(Sec) required for selenoprotein biosynthesis. In Photorhabdus laumondii subsp. laumondii (strain DSM 15139 / CIP 105565 / TT01) (Photorhabdus luminescens subsp. laumondii), this protein is L-seryl-tRNA(Sec) selenium transferase.